A 247-amino-acid chain; its full sequence is ATP synthase subunit a, chloroplastic (247 aa).

5 helical membrane-spanning segments follow: residues 38–58, 95–115, 134–154, 199–219, and 220–240; these read QVLITSWVVITILLGSVIIAV, VPFIGTMFLFIFVSNWSGALL, INTTVALALLTSAAYFYAGLS, LVVVVLVSLVPLVVPIPVMFL, and GLFTSGIQALIFATLAAAYIG.

It belongs to the ATPase A chain family. In terms of assembly, F-type ATPases have 2 components, CF(1) - the catalytic core - and CF(0) - the membrane proton channel. CF(1) has five subunits: alpha(3), beta(3), gamma(1), delta(1), epsilon(1). CF(0) has four main subunits: a, b, b' and c.

The protein localises to the plastid. Its subcellular location is the chloroplast thylakoid membrane. Functionally, key component of the proton channel; it plays a direct role in the translocation of protons across the membrane. This is ATP synthase subunit a, chloroplastic from Oryza sativa subsp. indica (Rice).